A 410-amino-acid polypeptide reads, in one-letter code: MSLRKRSAQTQMWESPVMSQGKQSLLELPLKESPPKDSGLKAVPSTHTLYVSHLNPQFSVPVLACLLRDTLERLELPVARGQIEVVRRPRNTYALVQVAAPKAVLASLPWRLQMALEEQLILKELTARGKELVLSEALESLHHREQEDSGPSPSHSPGPSPGPSPGLRHPPLPQLADPSPIWGSAGRRQISQNRPSGVRSDSAIVHHKILGQEQLFQGAFLGSETRNMEFKRGSGEYLSLAFKHHVRRYVCAFLNSEGGSLLVGVEDSGLVQGIHCSHRDEDRTRLLVDSILQGFKPQVFPDAYTLTFIPVISTTTTSTPLKVLRLTVHTPKAQGEPQLYETDQGEVFLRRDGSIQGPLSVGAIQDWCRQKWAMELGKLEEKVKVLTLEKEQLQQQLRQRQPLSCSCCVL.

Disordered stretches follow at residues 1 to 20 and 141 to 199; these read MSLR…VMSQ and LHHR…SGVR. A compositionally biased stretch (polar residues) spans 8-20; the sequence is AQTQMWESPVMSQ. The span at 154–173 shows a compositional bias: pro residues; the sequence is SHSPGPSPGPSPGLRHPPLP. Position 264 to 271 (264 to 271) interacts with ATP; it reads GVEDSGLV. The stretch at 370–401 forms a coiled coil; that stretch reads QKWAMELGKLEEKVKVLTLEKEQLQQQLRQRQ.

It belongs to the Schlafen family. Subgroup I subfamily.

This is Schlafen-like protein 1 (Slfnl1) from Mus musculus (Mouse).